The following is a 455-amino-acid chain: L-serine dehydratase (455 aa).

This sequence belongs to the iron-sulfur dependent L-serine dehydratase family. It depends on [4Fe-4S] cluster as a cofactor.

The catalysed reaction is L-serine = pyruvate + NH4(+). It functions in the pathway carbohydrate biosynthesis; gluconeogenesis. The polypeptide is L-serine dehydratase (sdaA) (Helicobacter pylori (strain ATCC 700392 / 26695) (Campylobacter pylori)).